Reading from the N-terminus, the 313-residue chain is Ribosomal RNA small subunit methyltransferase H (313 aa).

S-adenosyl-L-methionine contacts are provided by residues 35–37, Asp-55, Phe-79, Asp-101, and Gln-108; that span reads GGH.

It belongs to the methyltransferase superfamily. RsmH family.

It localises to the cytoplasm. It carries out the reaction cytidine(1402) in 16S rRNA + S-adenosyl-L-methionine = N(4)-methylcytidine(1402) in 16S rRNA + S-adenosyl-L-homocysteine + H(+). Functionally, specifically methylates the N4 position of cytidine in position 1402 (C1402) of 16S rRNA. This is Ribosomal RNA small subunit methyltransferase H from Salmonella agona (strain SL483).